A 252-amino-acid chain; its full sequence is Adenosylcobinamide-GDP ribazoletransferase (252 aa).

Helical transmembrane passes span 33 to 53, 105 to 125, 132 to 152, 184 to 204, and 215 to 235; these read FISP…VVLL, TGSG…IATL, LWFF…LLGL, FAIL…LLVF, and MSGD…LLVA.

It belongs to the CobS family. Mg(2+) serves as cofactor.

It localises to the cell membrane. It carries out the reaction alpha-ribazole + adenosylcob(III)inamide-GDP = adenosylcob(III)alamin + GMP + H(+). The catalysed reaction is alpha-ribazole 5'-phosphate + adenosylcob(III)inamide-GDP = adenosylcob(III)alamin 5'-phosphate + GMP + H(+). Its pathway is cofactor biosynthesis; adenosylcobalamin biosynthesis; adenosylcobalamin from cob(II)yrinate a,c-diamide: step 7/7. Its function is as follows. Joins adenosylcobinamide-GDP and alpha-ribazole to generate adenosylcobalamin (Ado-cobalamin). Also synthesizes adenosylcobalamin 5'-phosphate from adenosylcobinamide-GDP and alpha-ribazole 5'-phosphate. The chain is Adenosylcobinamide-GDP ribazoletransferase from Sulfolobus acidocaldarius (strain ATCC 33909 / DSM 639 / JCM 8929 / NBRC 15157 / NCIMB 11770).